We begin with the raw amino-acid sequence, 924 residues long: Intercellular adhesion molecule 5 (924 aa).

The first 31 residues, 1–31 (MPGPSPGLRRALLGLWAALGLGLFGLSAVSQ), serve as a signal peptide directing secretion. Residues 32 to 835 (EPFWADLQPR…RITVRVAGPW (804 aa)) lie on the Extracellular side of the membrane. Ig-like C2-type domains follow at residues 48-130 (GGSL…PLPP), 135-235 (GENF…RLAA), 242-329 (GSER…LLTL), 337-402 (GQMV…SAEL), 408-486 (PRLD…VTLT), 491-568 (PALD…VAVT), 573-662 (PRFE…VVSA), 666-739 (PEMD…RTVT), and 746-830 (PVVA…ITVR). N-linked (GlcNAc...) (high mannose) asparagine glycosylation is present at Asn-54. Disulfide bonds link Cys-55/Cys-99 and Cys-59/Cys-103. N-linked (GlcNAc...) asparagine glycans are attached at residues Asn-74 and Asn-137. A disulfide bridge links Cys-142 with Cys-198. Thr-182 and Thr-184 each carry phosphothreonine. Asn-195 and Asn-214 each carry an N-linked (GlcNAc...) asparagine glycan. An intrachain disulfide couples Cys-249 to Cys-302. N-linked (GlcNAc...) asparagine glycans are attached at residues Asn-303, Asn-316, Asn-371, and Asn-397. Cys-344 and Cys-383 are joined by a disulfide. Disulfide bonds link Cys-415–Cys-470, Cys-498–Cys-552, and Cys-580–Cys-645. Asn-583 and Asn-646 each carry an N-linked (GlcNAc...) asparagine glycan. Cys-673 and Cys-725 are oxidised to a cystine. Asn-764, Asn-795, and Asn-796 each carry an N-linked (GlcNAc...) asparagine glycan. A disulfide bond links Cys-769 and Cys-814. The helical transmembrane segment at 836 to 856 (LWVAVGGAAGGAALLAAGAGL) threads the bilayer. The Cytoplasmic portion of the chain corresponds to 857-924 (AFYVQSTACK…EVFAIQLTSA (68 aa)). Positions 891–903 (AGGAAGAEGGPEA) are enriched in gly residues. The disordered stretch occupies residues 891 to 911 (AGGAAGAEGGPEAAGGAAESP).

It belongs to the immunoglobulin superfamily. ICAM family. In terms of processing, glycosylation at Asn-54 is critical for functional folding. Expressed on neurons in the most rostral segment of the mammalian brain, the telencephalon.

The protein resides in the membrane. Functionally, ICAM proteins are ligands for the leukocyte adhesion protein LFA-1 (integrin alpha-L/beta-2). This Homo sapiens (Human) protein is Intercellular adhesion molecule 5 (ICAM5).